Consider the following 472-residue polypeptide: F420-non-reducing hydrogenase subunit A (472 aa).

Ni(2+) is bound by residues Cys-61, Cys-64, Cys-442, and Cys-445.

The protein belongs to the [NiFe]/[NiFeSe] hydrogenase large subunit family. The F420-non-reducing hydrogenase is composed of three subunits; MvhA, MvhD and MvhG. It forms a complex with the heterodisulfide reductase (hdr). Requires Ni(2+) as cofactor.

Its function is as follows. Part of a complex that provides reducing equivalents for heterodisulfide reductase. This Methanothermobacter thermautotrophicus (strain ATCC 29096 / DSM 1053 / JCM 10044 / NBRC 100330 / Delta H) (Methanobacterium thermoautotrophicum) protein is F420-non-reducing hydrogenase subunit A (mvhA).